The primary structure comprises 207 residues: MSNKDYKKLYLVTDYRIPFNELLEKTKEALIGGVSIVQYRAKNKKTKEMCKEAKELKKLCDEFGALFLVNDRIDVALAVKANGVHIGQDDMEVSIAREIMPKDAVIGVTVHNKEEALKAIKEGADNLGVGALFSTNSKDDATLMTLETLREIKSVSNIPLYGIGGITPYNLNKDILENLDGVAVISALLNSDNIREKSKEFLNILSK.

4-amino-2-methyl-5-(diphosphooxymethyl)pyrimidine-binding positions include Gln38–Lys42 and Asn70. Mg(2+)-binding residues include Asp71 and Asp90. Thr109 is a 4-amino-2-methyl-5-(diphosphooxymethyl)pyrimidine binding site. Residue Thr135–Ser137 participates in 2-[(2R,5Z)-2-carboxy-4-methylthiazol-5(2H)-ylidene]ethyl phosphate binding. Lys138 is a 4-amino-2-methyl-5-(diphosphooxymethyl)pyrimidine binding site. 2-[(2R,5Z)-2-carboxy-4-methylthiazol-5(2H)-ylidene]ethyl phosphate is bound by residues Gly165 and Ile185–Ser186.

Belongs to the thiamine-phosphate synthase family. It depends on Mg(2+) as a cofactor.

The enzyme catalyses 2-[(2R,5Z)-2-carboxy-4-methylthiazol-5(2H)-ylidene]ethyl phosphate + 4-amino-2-methyl-5-(diphosphooxymethyl)pyrimidine + 2 H(+) = thiamine phosphate + CO2 + diphosphate. It carries out the reaction 2-(2-carboxy-4-methylthiazol-5-yl)ethyl phosphate + 4-amino-2-methyl-5-(diphosphooxymethyl)pyrimidine + 2 H(+) = thiamine phosphate + CO2 + diphosphate. The catalysed reaction is 4-methyl-5-(2-phosphooxyethyl)-thiazole + 4-amino-2-methyl-5-(diphosphooxymethyl)pyrimidine + H(+) = thiamine phosphate + diphosphate. It functions in the pathway cofactor biosynthesis; thiamine diphosphate biosynthesis; thiamine phosphate from 4-amino-2-methyl-5-diphosphomethylpyrimidine and 4-methyl-5-(2-phosphoethyl)-thiazole: step 1/1. Condenses 4-methyl-5-(beta-hydroxyethyl)thiazole monophosphate (THZ-P) and 2-methyl-4-amino-5-hydroxymethyl pyrimidine pyrophosphate (HMP-PP) to form thiamine monophosphate (TMP). The sequence is that of Thiamine-phosphate synthase from Clostridium perfringens (strain 13 / Type A).